Here is a 100-residue protein sequence, read N- to C-terminus: Large ribosomal subunit protein uL23 (100 aa).

Belongs to the universal ribosomal protein uL23 family. In terms of assembly, part of the 50S ribosomal subunit. Contacts protein L29, and trigger factor when it is bound to the ribosome.

In terms of biological role, one of the early assembly proteins it binds 23S rRNA. One of the proteins that surrounds the polypeptide exit tunnel on the outside of the ribosome. Forms the main docking site for trigger factor binding to the ribosome. The sequence is that of Large ribosomal subunit protein uL23 from Idiomarina loihiensis (strain ATCC BAA-735 / DSM 15497 / L2-TR).